A 351-amino-acid chain; its full sequence is Flagellin (351 aa).

The protein belongs to the bacterial flagellin family.

It is found in the secreted. The protein resides in the bacterial flagellum. Functionally, flagellin is the subunit protein which polymerizes to form the filaments of bacterial flagella. This Serratia marcescens protein is Flagellin (fliC).